Consider the following 79-residue polypeptide: Hematopoietic cell signal transducer (79 aa).

Positions 1-18 (MAPPGGILFLLLLPVAAA) are cleaved as a signal peptide. The Extracellular portion of the chain corresponds to 19–35 (QVTSGSCSGCGPLSLPL). The helical transmembrane segment at 36–56 (LAGLVAADAVVSLLIVVGVFV) threads the bilayer. The Cytoplasmic segment spans residues 57 to 79 (CGRPRSRPTQEDGKIYINMPGRG). Tyr-72 is modified (phosphotyrosine). The interval 72 to 74 (YIN) is GRB2 binding site. The segment at 72–75 (YINM) is PIK3R1 binding site.

It belongs to the DAP10 family. In terms of assembly, homodimer; Disulfide-linked. Heterohexamer composed of four subunits of HCST/DAP10 and two subunits of KLRK1. Interacts (via transmembrane domain) with KLRK1 (via transmembrane domain); the interaction is required for KLRK1 NK cell surface and induces NK cell-mediated cytotoxicity. Interacts with PIK3R1 and GRB2. Interacts with CLEC5A. Forms an CLEC5A/TYROBP/HCST trimolecular complex depending almost solely on TYROBP. Interacts with KLRK1. Interacts with CD300H. In terms of processing, phosphorylated; PIK3R1 and GRB2 associate specifically with tyrosine-phosphorylated HCST. Post-translationally, O-glycosylated. As to expression, expressed predominantly in lymphohematopoietic tissues.

Its subcellular location is the membrane. In terms of biological role, transmembrane adapter protein which associates with KLRK1 to form an activation receptor KLRK1-HCST in lymphoid and myeloid cells; this receptor plays a major role in triggering cytotoxicity against target cells expressing cell surface ligands such as MHC class I chain-related MICA and MICB, and UL16-binding proteins (ULBPs); these ligands are up-regulated by stress conditions and pathological state such as viral infection and tumor transformation. Functions as a docking site for PI3-kinase PIK3R1 and GRB2. Interaction of ULBPs with KLRK1-HCST triggers calcium mobilization and activation of the PIK3R1, MAP2K/ERK, and JAK2/STAT5 signaling pathways. Both PIK3R1 and GRB2 are required for full KLRK1-HCST-mediated activation and ultimate killing of target cells. In NK cells, KLRK1-HCST signaling directly induces cytotoxicity and enhances cytokine production initiated via DAP12/TYROBP-associated receptors. In T-cells, it provides primarily costimulation for TCR-induced signals. KLRK1-HCST receptor plays a role in immune surveillance against tumors and is required for cytolysis of tumors cells; indeed, melanoma cells that do not express KLRK1 ligands escape from immune surveillance mediated by NK cells. This chain is Hematopoietic cell signal transducer (HCST), found in Sus scrofa (Pig).